The following is a 264-amino-acid chain: THAP domain-containing protein 10 (264 aa).

The THAP-type zinc-finger motif lies at Met-1–His-90. 2 disordered regions span residues His-90–Gly-136 and Thr-160–Arg-195. A compositionally biased stretch (basic and acidic residues) spans Gly-99–Glu-122. The span at Thr-160–Pro-175 shows a compositional bias: polar residues.

The sequence is that of THAP domain-containing protein 10 (THAP10) from Pongo abelii (Sumatran orangutan).